Consider the following 202-residue polypeptide: Glycerol-3-phosphate acyltransferase (202 aa).

Helical transmembrane passes span 2-22, 80-100, 119-139, and 158-178; these read ANLL…AVVV, LNET…LFPV, AIDP…AFFF, and VLMN…VLLI.

It belongs to the PlsY family. In terms of assembly, probably interacts with PlsX.

It localises to the cell inner membrane. It carries out the reaction an acyl phosphate + sn-glycerol 3-phosphate = a 1-acyl-sn-glycero-3-phosphate + phosphate. It functions in the pathway lipid metabolism; phospholipid metabolism. Functionally, catalyzes the transfer of an acyl group from acyl-phosphate (acyl-PO(4)) to glycerol-3-phosphate (G3P) to form lysophosphatidic acid (LPA). This enzyme utilizes acyl-phosphate as fatty acyl donor, but not acyl-CoA or acyl-ACP. This is Glycerol-3-phosphate acyltransferase from Cupriavidus necator (strain ATCC 17699 / DSM 428 / KCTC 22496 / NCIMB 10442 / H16 / Stanier 337) (Ralstonia eutropha).